Consider the following 242-residue polypeptide: Lactate utilization protein A 2 (242 aa).

Belongs to the LutA/YkgE family.

Functionally, is involved in L-lactate degradation and allows cells to grow with lactate as the sole carbon source. The chain is Lactate utilization protein A 2 from Bacillus cereus (strain Q1).